The primary structure comprises 261 residues: Acidic leucine-rich nuclear phosphoprotein 32 family member A (261 aa).

LRR repeat units lie at residues 16 to 37 (QITE…TDEY), 39 to 60 (ALES…PKLP), 61 to 83 (NLKK…TTSP), and 84 to 105 (KLQY…KPLE). The region spanning 118 to 156 (NDATQVDNYREKIFKMLPSLNFLDGFDCNDEEVQSDGDD) is the LRRCT domain. Acidic residues-rich tracts occupy residues 145-185 (CNDE…EEAN) and 194-229 (YNDD…DGDA). The segment at 145–261 (CNDEEVQSDG…VRGKKRKHDG (117 aa)) is disordered. Over residues 238-252 (AKDKDGEKEADESQV) the composition is skewed to basic and acidic residues.

This sequence belongs to the ANP32 family. Phosphorylated on serine residues.

The protein localises to the nucleus. It localises to the cytoplasm. In terms of biological role, implicated in a number of cellular processes, including proliferation, differentiation, caspase-dependent and caspase-independent apoptosis, suppression of transformation (tumor suppressor), inhibition of protein phosphatase 2A, regulation of mRNA trafficking and stability, and inhibition of acetyltransferases as part of the INHAT (inhibitor of histone acetyltransferases) complex. The polypeptide is Acidic leucine-rich nuclear phosphoprotein 32 family member A (Anp32a) (Drosophila melanogaster (Fruit fly)).